Consider the following 984-residue polypeptide: E3 ubiquitin-protein ligase BRE1A (984 aa).

The disordered stretch occupies residues 1–34 (MSGAGNKRAAGEPGPSAPPEKKAGVEDSGTTVET). Residues 43–90 (TEELDIRTLQTKNRKLAEMLDQRQAIEDELREHIEKLERRQATDDASL) are a coiled coil. The disordered stretch occupies residues 128 to 150 (VVPEPEPDSDSNQERKDERERGE). Residues 139–150 (NQERKDERERGE) are compositionally biased toward basic and acidic residues. Coiled coils occupy residues 236–378 (ADTL…VKET) and 429–907 (SLHK…TTKK). Residues 506–632 (SDLSKIRSRS…KHEDGRKKEA (127 aa)) form a disordered region. Polar residues predominate over residues 514–526 (RSGSALLQSQSST). Composition is skewed to basic and acidic residues over residues 527–540 (EDTK…KQEP) and 558–632 (SEVK…KKEA). The segment at 931–970 (CPCCNMRKKDAVLTKCFHVFCFECVKTRYDTRQRKCPKCN) adopts an RING-type zinc-finger fold.

The protein belongs to the BRE1 family. As to quaternary structure, component of the RNF20/40 complex (also known as BRE1 complex).

The protein resides in the nucleus. The enzyme catalyses S-ubiquitinyl-[E2 ubiquitin-conjugating enzyme]-L-cysteine + [acceptor protein]-L-lysine = [E2 ubiquitin-conjugating enzyme]-L-cysteine + N(6)-ubiquitinyl-[acceptor protein]-L-lysine.. It functions in the pathway protein modification; protein ubiquitination. Its function is as follows. Component of the RNF20/40 E3 ubiquitin-protein ligase complex that mediates monoubiquitination of 'Lys-120' of histone H2B (H2BK120ub1). H2BK120ub1 gives a specific tag for epigenetic transcriptional activation and is also prerequisite for histone H3 'Lys-4' and 'Lys-79' methylation (H3K4me and H3K79me, respectively). The chain is E3 ubiquitin-protein ligase BRE1A (RNF20) from Gallus gallus (Chicken).